The following is a 340-amino-acid chain: Ribonucleoside-diphosphate reductase small subunit (340 aa).

The helical transmembrane segment at 180-200 (FILMILIEGIFFAASFAAIAY) threads the bilayer.

The protein belongs to the ribonucleoside diphosphate reductase small chain family. Heterotetramer composed of a homodimer of the large subunit (R1) and a homodimer of the small subunit (R2). Larger multisubunit protein complex are also active, composed of (R1)n(R2)n. It depends on Fe cation as a cofactor.

Its subcellular location is the host membrane. The catalysed reaction is a 2'-deoxyribonucleoside 5'-diphosphate + [thioredoxin]-disulfide + H2O = a ribonucleoside 5'-diphosphate + [thioredoxin]-dithiol. Ribonucleoside-diphosphate reductase holoenzyme provides the precursors necessary for viral DNA synthesis. Allows virus growth in non-dividing cells, as well as reactivation from latency in infected hosts. Catalyzes the biosynthesis of deoxyribonucleotides from the corresponding ribonucleotides. This chain is Ribonucleoside-diphosphate reductase small subunit, found in Human herpesvirus 1 (strain 17) (HHV-1).